The chain runs to 114 residues: Large ribosomal subunit protein bL20c (114 aa).

Belongs to the bacterial ribosomal protein bL20 family.

Its subcellular location is the plastid. It localises to the chloroplast. Its function is as follows. Binds directly to 23S ribosomal RNA and is necessary for the in vitro assembly process of the 50S ribosomal subunit. It is not involved in the protein synthesizing functions of that subunit. This Trieres chinensis (Marine centric diatom) protein is Large ribosomal subunit protein bL20c (rpl20).